The following is a 66-amino-acid chain: MNWQHTPRGGYGYSVCVAGIVTKIAAKRVQIRVAVRSGNEWQQVTKWVEPARLSTREKPVPELDGA.

Positions 33-52 (VAVRSGNEWQQVTKWVEPAR) form a DNA-binding region, H-T-H motif.

This chain is Protein KleD (kleD), found in Escherichia coli.